The chain runs to 234 residues: Large ribosomal subunit protein uL1 (234 aa).

This sequence belongs to the universal ribosomal protein uL1 family. In terms of assembly, part of the 50S ribosomal subunit.

Its function is as follows. Binds directly to 23S rRNA. The L1 stalk is quite mobile in the ribosome, and is involved in E site tRNA release. Functionally, protein L1 is also a translational repressor protein, it controls the translation of the L11 operon by binding to its mRNA. This Escherichia coli (strain 55989 / EAEC) protein is Large ribosomal subunit protein uL1.